The following is a 140-amino-acid chain: MALKKNTHNKSTKRVTKHPSLKTLTHKQIHTTIFVKSTTPYVSALKRINKFLDSVHKQGSSYVAVLGMGKAVEKTLALGCHFQDQKNKKIEVYTKTIEVLDEVITEGQADIDMESDVEDDDKETQLKKRAVSGVELRIYV.

The tract at residues M1–L21 is disordered. At S115 the chain carries Phosphoserine.

It belongs to the histone-like Alba family. As to quaternary structure, component of nuclear RNase P and RNase MRP complexes. RNase P consists of an RNA moiety and at least 9 protein subunits including POP1, POP3, POP4, POP5, POP6, POP7, POP8, RPP1 and RPR2. RNase MRP complex consists of an RNA moiety and at least 10 protein subunits including POP1, POP3, POP4, POP5, POP6, POP7, POP8, RMP1, RPP1 and SNM1, many of which are shared with the RNase P complex.

Its subcellular location is the nucleus. The catalysed reaction is Endonucleolytic cleavage of RNA, removing 5'-extranucleotides from tRNA precursor.. Component of ribonuclease P, a protein complex that generates mature tRNA molecules by cleaving their 5'-ends. Also a component of RNase MRP, which cleaves pre-rRNA sequences. The protein is Ribonucleases P/MRP protein subunit POP7 (POP7) of Saccharomyces cerevisiae (strain ATCC 204508 / S288c) (Baker's yeast).